We begin with the raw amino-acid sequence, 510 residues long: Histidine ammonia-lyase (510 aa).

Positions 143-145 (ASG) form a cross-link, 5-imidazolinone (Ala-Gly). The residue at position 144 (S144) is a 2,3-didehydroalanine (Ser).

The protein belongs to the PAL/histidase family. Post-translationally, contains an active site 4-methylidene-imidazol-5-one (MIO), which is formed autocatalytically by cyclization and dehydration of residues Ala-Ser-Gly.

It localises to the cytoplasm. It catalyses the reaction L-histidine = trans-urocanate + NH4(+). The protein operates within amino-acid degradation; L-histidine degradation into L-glutamate; N-formimidoyl-L-glutamate from L-histidine: step 1/3. The polypeptide is Histidine ammonia-lyase (Psychromonas ingrahamii (strain DSM 17664 / CCUG 51855 / 37)).